Reading from the N-terminus, the 171-residue chain is Peptide methionine sulfoxide reductase MsrA (171 aa).

The active site involves cysteine 13.

This sequence belongs to the MsrA Met sulfoxide reductase family.

The catalysed reaction is L-methionyl-[protein] + [thioredoxin]-disulfide + H2O = L-methionyl-(S)-S-oxide-[protein] + [thioredoxin]-dithiol. The enzyme catalyses [thioredoxin]-disulfide + L-methionine + H2O = L-methionine (S)-S-oxide + [thioredoxin]-dithiol. Has an important function as a repair enzyme for proteins that have been inactivated by oxidation. Catalyzes the reversible oxidation-reduction of methionine sulfoxide in proteins to methionine. This is Peptide methionine sulfoxide reductase MsrA from Mycobacterium ulcerans (strain Agy99).